The primary structure comprises 60 residues: Prokaryotic ubiquitin-like protein UBact (60 aa).

The tract at residues 1–60 (MPERKTQPTTDQPWTKPNDGGDESGPRSPEVERPNTRDLLERMKRVDPRQARRYRQRSGE) is disordered. Positions 29–50 (PEVERPNTRDLLERMKRVDPRQ) are enriched in basic and acidic residues. Over residues 51 to 60 (ARRYRQRSGE) the composition is skewed to basic residues. E60 participates in a covalent cross-link: Isoglutamyl lysine isopeptide (Glu-Lys) (interchain with K-? in acceptor proteins).

This sequence belongs to the ubiquitin-like protein UBact family.

In terms of biological role, may function as a protein modifier covalently attached to lysine residues of substrate proteins. This may serve to target the modified proteins for degradation by proteasomes. The protein is Prokaryotic ubiquitin-like protein UBact of Fraserbacteria sp. (strain RBG_16_55_9).